The chain runs to 395 residues: Phosphoprotein (395 aa).

Positions 178 to 217 (NGVLHGSEIRSKSSSGVIPGVPQSRPQLASSPAHADPAPA) are disordered. Over residues 206 to 217 (ASSPAHADPAPA) the composition is skewed to low complexity. The segment at 220-283 (ENVKEIIELL…ITTIKIMDPS (64 aa)) is multimerization.

It belongs to the rubulavirus/avulavirus P protein family. In terms of assembly, homotetramer. Interacts (via multimerization domain) with polymerase L; this interaction forms the polymerase L-P complex. Interacts (via N-terminus) with N0 (via Ncore); this interaction allows P to chaperon N0 to avoid N polymerization before encapsidation. Interacts (via C-terminus) with N-RNA template; this interaction positions the polymerase on the template for both transcription and replication. Interacts with host ARHGAP26; this interaction promotes host RHOA activation. Interacts with host KPNA1 and KPNA6.

It localises to the host cytoplasm. In terms of biological role, essential cofactor of the RNA polymerase L that plays a central role in the transcription and replication by forming the polymerase complex with RNA polymerase L and recruiting L to the genomic N-RNA template for RNA synthesis. Also plays a central role in the encapsidation of nascent RNA chains by forming the encapsidation complex with the nucleocapsid protein N (N-P complex). Acts as a chaperone for newly synthesized free N protein, so-called N0, allowing encapsidation of nascent RNA chains during replication. The nucleoprotein protein N prevents excessive phosphorylation of P, which leads to down-regulation of viral transcription/ replication. Participates, together with N, in the formation of viral factories (viroplasms), which are large inclusions in the host cytoplasm where replication takes place. Also plays a role in viral growth by promoting host RHOA activation and thus actin formation via ARHGAP26 inhibition. This is Phosphoprotein (P/V) from Homo sapiens (Human).